Reading from the N-terminus, the 288-residue chain is THO complex subunit 4D (288 aa).

The tract at residues 1–55 is disordered; that stretch reads MSGALNMTLDEIVKRGKTARSGGRGISRGRGRGRGGGGRGAGPARRGPLAVNARP. S2 is modified (N-acetylserine). One can recognise an RRM domain in the interval 93-170; the sequence is TRLHVTNLDQ…RPMRLEILGG (78 aa). The disordered stretch occupies residues 201 to 288; sequence QGGGGRGRVR…SYHADAMNTS (88 aa). Residues 232 to 260 are compositionally biased toward gly residues; sequence QGGGMRGGRGGFRARGRGNGGRGRGGGRG. The segment covering 264–281 has biased composition (basic and acidic residues); sequence KPVEKSAADLDKDLESYH.

This sequence belongs to the ALYREF family. As to quaternary structure, interacts with PARP1. Interacts with EIF4A3.

The protein resides in the nucleus. The protein localises to the nucleoplasm. It localises to the nucleolus. Functionally, export adapter involved in nuclear export of spliced and unspliced mRNA. Plays a role in disease resistance. Mediates multiple defense responses triggered by NEP1, including stomatal closure, hypersensitive cell death (HCD) and defense-related gene expression. The chain is THO complex subunit 4D from Arabidopsis thaliana (Mouse-ear cress).